Here is a 665-residue protein sequence, read N- to C-terminus: Ion-translocating oxidoreductase complex subunit C (665 aa).

2 consecutive 4Fe-4S ferredoxin-type domains span residues 368 to 398 (EYAE…QQLY) and 408 to 437 (KSEE…IQYF). [4Fe-4S] cluster is bound by residues C378, C381, C384, C388, C417, C420, C423, and C427. 2 stretches are compositionally biased toward basic and acidic residues: residues 465–477 (QARM…ERKA) and 485–513 (ARRE…KANE). Disordered stretches follow at residues 465–568 (QARM…DAKK), 580–623 (AKKL…LDPK), and 637–665 (KKLA…QIVR). 2 stretches are compositionally biased toward polar residues: residues 554–564 (VENQEQQTQPT) and 585–600 (QTNS…QTAE). The segment covering 602-615 (EVEKTKSAVEKTEE) has biased composition (basic and acidic residues). The span at 643–656 (NSTSEAISNSQTAE) shows a compositional bias: polar residues.

Belongs to the 4Fe4S bacterial-type ferredoxin family. RnfC subfamily. As to quaternary structure, the complex is composed of six subunits: RnfA, RnfB, RnfC, RnfD, RnfE and RnfG. It depends on [4Fe-4S] cluster as a cofactor.

It localises to the cell inner membrane. In terms of biological role, part of a membrane-bound complex that couples electron transfer with translocation of ions across the membrane. In Haemophilus influenzae (strain 86-028NP), this protein is Ion-translocating oxidoreductase complex subunit C.